A 435-amino-acid chain; its full sequence is Trigger factor (435 aa).

A PPIase FKBP-type domain is found at 161–246; it reads GDKLTLDFTG…IHKTEGPILP (86 aa).

This sequence belongs to the FKBP-type PPIase family. Tig subfamily.

Its subcellular location is the cytoplasm. It carries out the reaction [protein]-peptidylproline (omega=180) = [protein]-peptidylproline (omega=0). Its function is as follows. Involved in protein export. Acts as a chaperone by maintaining the newly synthesized protein in an open conformation. Functions as a peptidyl-prolyl cis-trans isomerase. The chain is Trigger factor from Colwellia psychrerythraea (strain 34H / ATCC BAA-681) (Vibrio psychroerythus).